Consider the following 401-residue polypeptide: Aspartate aminotransferase, mitochondrial (401 aa).

The residue at position 19 (Thr-19) is a Phosphothreonine. Residue Lys-30 is modified to N6-acetyllysine. Gly-36 provides a ligand contact to substrate. Lys-44 bears the N6-acetyllysine; alternate mark. Residue Lys-44 is modified to N6-succinyllysine; alternate. Position 53 is an N6-acetyllysine (Lys-53). At Lys-61 the chain carries N6-acetyllysine; alternate. Position 61 is an N6-succinyllysine; alternate (Lys-61). Tyr-67 is modified (3'-nitrotyrosine; alternate). Tyr-67 bears the Phosphotyrosine; alternate mark. N6-acetyllysine; alternate is present on residues Lys-78, Lys-93, and Lys-130. An N6-succinyllysine; alternate mark is found at Lys-78, Lys-93, and Lys-130. A substrate-binding site is contributed by Trp-133. The residue at position 156 (Lys-156) is an N6-acetyllysine; alternate. Residue Lys-156 is modified to N6-succinyllysine; alternate. Asn-186 is a binding site for substrate. Position 198 is an N6-succinyllysine (Lys-198). N6-acetyllysine is present on Lys-205. Residues Lys-250 and Lys-267 each carry the N6-acetyllysine; alternate modification. Residue Lys-250 is modified to N6-(pyridoxal phosphate)lysine; alternate. Lys-267 is modified (N6-succinyllysine; alternate). Lys-273 is subject to N6-acetyllysine. The residue at position 280 (Lys-280) is an N6-acetyllysine; alternate. Lys-280 carries the N6-succinyllysine; alternate modification. At Arg-284 the chain carries Asymmetric dimethylarginine. At Lys-309 the chain carries N6-acetyllysine; alternate. Residue Lys-309 is modified to N6-succinyllysine; alternate. At Lys-316 the chain carries N6-acetyllysine. Lys-334 is modified (N6-acetyllysine; alternate). At Lys-334 the chain carries N6-succinyllysine; alternate. Lys-335 and Lys-358 each carry N6-acetyllysine. Lys-367 and Lys-375 each carry N6-acetyllysine; alternate. An N6-succinyllysine; alternate mark is found at Lys-367 and Lys-375. Arg-378 is a binding site for substrate.

Belongs to the class-I pyridoxal-phosphate-dependent aminotransferase family. Homodimer. Pyridoxal 5'-phosphate is required as a cofactor.

It is found in the mitochondrion matrix. The protein localises to the cell membrane. It carries out the reaction L-aspartate + 2-oxoglutarate = oxaloacetate + L-glutamate. It catalyses the reaction L-kynurenine + 2-oxoglutarate = kynurenate + L-glutamate + H2O. Its function is as follows. Catalyzes the irreversible transamination of the L-tryptophan metabolite L-kynurenine to form kynurenic acid (KA). As a member of the malate-aspartate shuttle, it has a key role in the intracellular NAD(H) redox balance. Is important for metabolite exchange between mitochondria and cytosol, and for amino acid metabolism. Facilitates cellular uptake of long-chain free fatty acids. The polypeptide is Aspartate aminotransferase, mitochondrial (GOT2) (Equus caballus (Horse)).